Reading from the N-terminus, the 424-residue chain is uncharacterized protein (424 aa).

This is an uncharacterized protein from Orgyia pseudotsugata (Douglas-fir tussock moth).